Consider the following 497-residue polypeptide: Cysteine--tRNA ligase (497 aa).

Cys34 lines the Zn(2+) pocket. The short motif at 36–46 is the 'HIGH' region element; that stretch reads PTVYDFAHIGN. Zn(2+)-binding residues include Cys243, His268, and Glu272. The 'KMSKS' region signature appears at 301 to 305; that stretch reads KMAKS. An ATP-binding site is contributed by Lys304. The disordered stretch occupies residues 478 to 497; sequence LMDYKDPETGERRTKWEVKR. Over residues 480–497 the composition is skewed to basic and acidic residues; the sequence is DYKDPETGERRTKWEVKR.

Belongs to the class-I aminoacyl-tRNA synthetase family. As to quaternary structure, monomer. Zn(2+) is required as a cofactor.

It localises to the cytoplasm. It catalyses the reaction tRNA(Cys) + L-cysteine + ATP = L-cysteinyl-tRNA(Cys) + AMP + diphosphate. The protein is Cysteine--tRNA ligase of Chelativorans sp. (strain BNC1).